Reading from the N-terminus, the 776-residue chain is Mitochondrial intermediate peptidase (776 aa).

A mitochondrion-targeting transit peptide spans 1–28; the sequence is MRRFSTLSRRLQRVVPASSASTANTSPS. Position 561 (His-561) interacts with Zn(2+). Residue Glu-562 is part of the active site. Zn(2+) is bound by residues His-565 and His-568.

Belongs to the peptidase M3 family. Requires Zn(2+) as cofactor.

The protein localises to the mitochondrion matrix. The catalysed reaction is Release of an N-terminal octapeptide as second stage of processing of some proteins imported into the mitochondrion.. Cleaves proteins, imported into the mitochondrion, to their mature size. While most mitochondrial precursor proteins are processed to the mature form in one step by mitochondrial processing peptidase (MPP), the sequential cleavage by MIP of an octapeptide after initial processing by MPP is a required step for a subgroup of nuclear-encoded precursor proteins destined for the matrix or the inner membrane. The protein is Mitochondrial intermediate peptidase (OCT1) of Yarrowia lipolytica (strain CLIB 122 / E 150) (Yeast).